The primary structure comprises 284 residues: D-tagatose-1,6-bisphosphate aldolase subunit GatY (284 aa).

The active-site Proton donor is the Asp-82. Positions 83 and 180 each coordinate Zn(2+). Gly-181 contacts dihydroxyacetone phosphate. His-208 contacts Zn(2+). Dihydroxyacetone phosphate is bound by residues 209–211 (GAS) and 230–233 (NVAT).

This sequence belongs to the class II fructose-bisphosphate aldolase family. TagBP aldolase GatY subfamily. In terms of assembly, forms a complex with GatZ. It depends on Zn(2+) as a cofactor.

It carries out the reaction D-tagatofuranose 1,6-bisphosphate = D-glyceraldehyde 3-phosphate + dihydroxyacetone phosphate. It participates in carbohydrate metabolism; D-tagatose 6-phosphate degradation; D-glyceraldehyde 3-phosphate and glycerone phosphate from D-tagatose 6-phosphate: step 2/2. In terms of biological role, catalytic subunit of the tagatose-1,6-bisphosphate aldolase GatYZ, which catalyzes the reversible aldol condensation of dihydroxyacetone phosphate (DHAP or glycerone-phosphate) with glyceraldehyde 3-phosphate (G3P) to produce tagatose 1,6-bisphosphate (TBP). Requires GatZ subunit for full activity and stability. Is involved in the catabolism of galactitol. The protein is D-tagatose-1,6-bisphosphate aldolase subunit GatY (gatY) of Escherichia coli.